The sequence spans 304 residues: GTP cyclohydrolase FolE2 (304 aa).

This sequence belongs to the GTP cyclohydrolase IV family.

The catalysed reaction is GTP + H2O = 7,8-dihydroneopterin 3'-triphosphate + formate + H(+). It participates in cofactor biosynthesis; 7,8-dihydroneopterin triphosphate biosynthesis; 7,8-dihydroneopterin triphosphate from GTP: step 1/1. Functionally, converts GTP to 7,8-dihydroneopterin triphosphate. The sequence is that of GTP cyclohydrolase FolE2 from Chromohalobacter salexigens (strain ATCC BAA-138 / DSM 3043 / CIP 106854 / NCIMB 13768 / 1H11).